A 175-amino-acid chain; its full sequence is SKP1-like protein 20 (175 aa).

The interaction with the F-box domain of F-box proteins stretch occupies residues 117 to 175 (ILAANYLNIKGLLDLTCQTVADMIKGKTPEEIRKTFNIKNDFTPEEEEEVRRENQWAFE).

Belongs to the SKP1 family. Part of a SCF (SKP1-CUL1-F-box protein) E3 ubiquitin-protein ligase complex. Interacts with rice black streaked dwarf virus RBSDV protein P7-2. Is able to form the SCF complex together with CUL1 and the viral P7-2 protein. Interacts with D3.

It is found in the nucleus. It functions in the pathway protein modification; protein ubiquitination. In terms of biological role, involved in ubiquitination and subsequent proteasomal degradation of target proteins. Together with CUL1, a RING-box and a F-box protein, it forms a SCF E3 ubiquitin ligase complex. The functional specificity of this complex depends on the type of F-box protein. In the SCF complex, it serves as an adapter that links the F-box protein to CUL1. The sequence is that of SKP1-like protein 20 from Oryza sativa subsp. japonica (Rice).